A 1062-amino-acid chain; its full sequence is Inactive tyrosine-protein kinase 7 (1062 aa).

Positions 1–22 are cleaved as a signal peptide; it reads MGARPLTLLRALLLPLLAGAQA. Ig-like C2-type domains lie at 23 to 112, 120 to 210, 217 to 309, 301 to 399, 404 to 489, 495 to 578, and 570 to 672; these read AIVF…ASFN, PVVL…FTLS, ARVV…EATL, PPIV…VNIT, PTWL…ARVQ, KFTP…HVQL, and GQIR…APLL. Residues 23-696 lie on the Extracellular side of the membrane; sequence AIVFIKEPSS…SPPPYKMIQT (674 aa). Cysteine 45 and cysteine 93 form a disulfide bridge. Asparagine 98, asparagine 108, asparagine 176, asparagine 206, asparagine 260, and asparagine 275 each carry an N-linked (GlcNAc...) asparagine glycan. A disulfide bridge links cysteine 142 with cysteine 192. 2 cysteine pairs are disulfide-bonded: cysteine 238–cysteine 293 and cysteine 335–cysteine 383. N-linked (GlcNAc...) asparagine glycans are attached at residues asparagine 397, asparagine 455, asparagine 559, and asparagine 638. Disulfide bonds link cysteine 425/cysteine 473, cysteine 516/cysteine 562, and cysteine 605/cysteine 656. A helical membrane pass occupies residues 697–717; the sequence is IGLSVGAAVAYIIAVLGLMFY. Over 718–1062 the chain is Cytoplasmic; sequence CKKRCKAKRL…LGDSPADSKQ (345 aa). 2 disordered regions span residues 728-750 and 1039-1062; these read QKQP…QNGQ and NPKD…DSKQ. The interval 786–1062 is interaction with CTNNB1; that stretch reads ASLQPITTLG…LGDSPADSKQ (277 aa). In terms of domain architecture, Protein kinase; inactive spans 788 to 1058; sequence LQPITTLGKS…IASTLGDSPA (271 aa). Serine 1056 is modified (phosphoserine).

Belongs to the protein kinase superfamily. Tyr protein kinase family. Insulin receptor subfamily. In terms of assembly, interacts with CTNNB1. Post-translationally, MMP14 cleaves PTK7 between Pro-613 and Leu-614 generating an N-terminal soluble (70 kDa) fragment and a membrane C-terminal (50 kDa) fragment. Proteolysis by MMP14 regulates PTK7 function in non-canonical Wnt signaling pathway. In terms of tissue distribution, expressed at high levels in lung and un-pregnant uterus among adult tissues, and in the tail, limbs, somites, gut and craniofacial regions among embryonic tissues.

It localises to the membrane. Its subcellular location is the cell junction. Functionally, inactive tyrosine kinase involved in Wnt signaling pathway. Component of both the non-canonical (also known as the Wnt/planar cell polarity signaling) and the canonical Wnt signaling pathway. Functions in cell adhesion, cell migration, cell polarity, proliferation, actin cytoskeleton reorganization and apoptosis. Has a role in embryogenesis, epithelial tissue organization and angiogenesis. The protein is Inactive tyrosine-protein kinase 7 (Ptk7) of Mus musculus (Mouse).